Consider the following 547-residue polypeptide: Chaperonin GroEL 1 (547 aa).

ATP-binding positions include 30-33 (TLGP), Lys51, 87-91 (DGTTT), Gly415, and Asp495.

Belongs to the chaperonin (HSP60) family. As to quaternary structure, forms a cylinder of 14 subunits composed of two heptameric rings stacked back-to-back. Interacts with the co-chaperonin GroES.

The protein resides in the cytoplasm. It catalyses the reaction ATP + H2O + a folded polypeptide = ADP + phosphate + an unfolded polypeptide.. In terms of biological role, together with its co-chaperonin GroES, plays an essential role in assisting protein folding. The GroEL-GroES system forms a nano-cage that allows encapsulation of the non-native substrate proteins and provides a physical environment optimized to promote and accelerate protein folding. The protein is Chaperonin GroEL 1 of Azorhizobium caulinodans (strain ATCC 43989 / DSM 5975 / JCM 20966 / LMG 6465 / NBRC 14845 / NCIMB 13405 / ORS 571).